Consider the following 117-residue polypeptide: Large ribosomal subunit protein bL20 (117 aa).

This sequence belongs to the bacterial ribosomal protein bL20 family.

Its function is as follows. Binds directly to 23S ribosomal RNA and is necessary for the in vitro assembly process of the 50S ribosomal subunit. It is not involved in the protein synthesizing functions of that subunit. The sequence is that of Large ribosomal subunit protein bL20 from Trichlorobacter lovleyi (strain ATCC BAA-1151 / DSM 17278 / SZ) (Geobacter lovleyi).